A 122-amino-acid polypeptide reads, in one-letter code: Large ribosomal subunit protein uL14c (122 aa).

It belongs to the universal ribosomal protein uL14 family. In terms of assembly, part of the 50S ribosomal subunit.

It localises to the plastid. Its subcellular location is the chloroplast. Its function is as follows. Binds to 23S rRNA. In Chaetosphaeridium globosum (Charophycean green alga), this protein is Large ribosomal subunit protein uL14c.